We begin with the raw amino-acid sequence, 435 residues long: Xylose isomerase (435 aa).

Catalysis depends on residues H100 and D103. 7 residues coordinate Mg(2+): E231, E267, H270, D295, D306, D308, and D338.

It belongs to the xylose isomerase family. Homotetramer. The cofactor is Mg(2+).

The protein localises to the cytoplasm. The catalysed reaction is alpha-D-xylose = alpha-D-xylulofuranose. The chain is Xylose isomerase from Brucella suis (strain ATCC 23445 / NCTC 10510).